A 326-amino-acid polypeptide reads, in one-letter code: 4-hydroxythreonine-4-phosphate dehydrogenase (326 aa).

His133 and Thr134 together coordinate substrate. A divalent metal cation contacts are provided by His163, His208, and His263. 3 residues coordinate substrate: Lys271, Asn280, and Arg289.

This sequence belongs to the PdxA family. Homodimer. Requires Zn(2+) as cofactor. Mg(2+) serves as cofactor. It depends on Co(2+) as a cofactor.

Its subcellular location is the cytoplasm. The enzyme catalyses 4-(phosphooxy)-L-threonine + NAD(+) = 3-amino-2-oxopropyl phosphate + CO2 + NADH. It participates in cofactor biosynthesis; pyridoxine 5'-phosphate biosynthesis; pyridoxine 5'-phosphate from D-erythrose 4-phosphate: step 4/5. Functionally, catalyzes the NAD(P)-dependent oxidation of 4-(phosphooxy)-L-threonine (HTP) into 2-amino-3-oxo-4-(phosphooxy)butyric acid which spontaneously decarboxylates to form 3-amino-2-oxopropyl phosphate (AHAP). In Pseudoalteromonas atlantica (strain T6c / ATCC BAA-1087), this protein is 4-hydroxythreonine-4-phosphate dehydrogenase.